The following is a 331-amino-acid chain: Holliday junction branch migration complex subunit RuvB (331 aa).

A large ATPase domain (RuvB-L) region spans residues 1-182; the sequence is MSSDTLHKYE…FGIPLHLEFY (182 aa). ATP contacts are provided by residues leucine 21, arginine 22, glycine 63, lysine 66, threonine 67, threonine 68, 129 to 131, arginine 172, tyrosine 182, and arginine 219; that span reads EDY. Threonine 67 is a binding site for Mg(2+). Residues 183–254 form a small ATPAse domain (RuvB-S) region; it reads SVDELVLVIK…FANSALFRLG (72 aa). Residues 257–331 are head domain (RuvB-H); the sequence is GAGFDKMDLK…FEYLLSSKYI (75 aa). DNA is bound by residues arginine 310 and arginine 315.

It belongs to the RuvB family. Homohexamer. Forms an RuvA(8)-RuvB(12)-Holliday junction (HJ) complex. HJ DNA is sandwiched between 2 RuvA tetramers; dsDNA enters through RuvA and exits via RuvB. An RuvB hexamer assembles on each DNA strand where it exits the tetramer. Each RuvB hexamer is contacted by two RuvA subunits (via domain III) on 2 adjacent RuvB subunits; this complex drives branch migration. In the full resolvosome a probable DNA-RuvA(4)-RuvB(12)-RuvC(2) complex forms which resolves the HJ.

It localises to the cytoplasm. The catalysed reaction is ATP + H2O = ADP + phosphate + H(+). The RuvA-RuvB-RuvC complex processes Holliday junction (HJ) DNA during genetic recombination and DNA repair, while the RuvA-RuvB complex plays an important role in the rescue of blocked DNA replication forks via replication fork reversal (RFR). RuvA specifically binds to HJ cruciform DNA, conferring on it an open structure. The RuvB hexamer acts as an ATP-dependent pump, pulling dsDNA into and through the RuvAB complex. RuvB forms 2 homohexamers on either side of HJ DNA bound by 1 or 2 RuvA tetramers; 4 subunits per hexamer contact DNA at a time. Coordinated motions by a converter formed by DNA-disengaged RuvB subunits stimulates ATP hydrolysis and nucleotide exchange. Immobilization of the converter enables RuvB to convert the ATP-contained energy into a lever motion, pulling 2 nucleotides of DNA out of the RuvA tetramer per ATP hydrolyzed, thus driving DNA branch migration. The RuvB motors rotate together with the DNA substrate, which together with the progressing nucleotide cycle form the mechanistic basis for DNA recombination by continuous HJ branch migration. Branch migration allows RuvC to scan DNA until it finds its consensus sequence, where it cleaves and resolves cruciform DNA. The polypeptide is Holliday junction branch migration complex subunit RuvB (Anaplasma marginale (strain St. Maries)).